Here is a 555-residue protein sequence, read N- to C-terminus: CTP synthase (555 aa).

The tract at residues Met1–Leu267 is amidoligase domain. CTP is bound at residue Ser13. Ser13 provides a ligand contact to UTP. Ser14–Ile19 contributes to the ATP binding site. Tyr54 contributes to the L-glutamine binding site. Asp71 lines the ATP pocket. Positions 71 and 141 each coordinate Mg(2+). CTP is bound by residues Asp148–Glu150, Lys188–Gln193, and Lys224. Residues Lys188–Gln193 and Lys224 contribute to the UTP site. The Glutamine amidotransferase type-1 domain occupies Ala292–Glu535. Gly354 contacts L-glutamine. The active-site Nucleophile; for glutamine hydrolysis is Cys381. L-glutamine contacts are provided by residues Leu382–Gln385, Glu406, and Arg463. Active-site residues include His508 and Glu510.

The protein belongs to the CTP synthase family. Homotetramer.

The enzyme catalyses UTP + L-glutamine + ATP + H2O = CTP + L-glutamate + ADP + phosphate + 2 H(+). It carries out the reaction L-glutamine + H2O = L-glutamate + NH4(+). The catalysed reaction is UTP + NH4(+) + ATP = CTP + ADP + phosphate + 2 H(+). It functions in the pathway pyrimidine metabolism; CTP biosynthesis via de novo pathway; CTP from UDP: step 2/2. With respect to regulation, allosterically activated by GTP, when glutamine is the substrate; GTP has no effect on the reaction when ammonia is the substrate. The allosteric effector GTP functions by stabilizing the protein conformation that binds the tetrahedral intermediate(s) formed during glutamine hydrolysis. Inhibited by the product CTP, via allosteric rather than competitive inhibition. Catalyzes the ATP-dependent amination of UTP to CTP with either L-glutamine or ammonia as the source of nitrogen. Regulates intracellular CTP levels through interactions with the four ribonucleotide triphosphates. This chain is CTP synthase, found in Roseiflexus castenholzii (strain DSM 13941 / HLO8).